The chain runs to 359 residues: Alanine racemase, biosynthetic (359 aa).

Lysine 34 acts as the Proton acceptor; specific for D-alanine in catalysis. Lysine 34 is subject to N6-(pyridoxal phosphate)lysine. Lysine 122 is subject to N6-carboxylysine. Arginine 129 provides a ligand contact to substrate. The active-site Proton acceptor; specific for L-alanine is tyrosine 255. Methionine 303 is a binding site for substrate.

This sequence belongs to the alanine racemase family. In terms of assembly, homodimer. It depends on pyridoxal 5'-phosphate as a cofactor.

It catalyses the reaction L-alanine = D-alanine. Its pathway is amino-acid biosynthesis; D-alanine biosynthesis; D-alanine from L-alanine: step 1/1. The protein operates within cell wall biogenesis; peptidoglycan biosynthesis. Its function is as follows. Catalyzes the interconversion of L-alanine and D-alanine. Provides the D-alanine required for cell wall biosynthesis. The chain is Alanine racemase, biosynthetic from Escherichia coli (strain K12).